The following is an 85-amino-acid chain: uncharacterized protein (85 aa).

This sequence belongs to the ycf76 family.

The protein resides in the plastid. It localises to the chloroplast. This is an uncharacterized protein from Zea mays (Maize).